The sequence spans 61 residues: Small ribosomal subunit protein uS14 (61 aa).

Cysteine 24, cysteine 27, cysteine 40, and cysteine 43 together coordinate Zn(2+).

The protein belongs to the universal ribosomal protein uS14 family. Zinc-binding uS14 subfamily. In terms of assembly, part of the 30S ribosomal subunit. Contacts proteins S3 and S10. Zn(2+) is required as a cofactor.

Its function is as follows. Binds 16S rRNA, required for the assembly of 30S particles and may also be responsible for determining the conformation of the 16S rRNA at the A site. The polypeptide is Small ribosomal subunit protein uS14 (Geobacter metallireducens (strain ATCC 53774 / DSM 7210 / GS-15)).